An 815-amino-acid polypeptide reads, in one-letter code: Phosphatidylinositol 4-phosphate 5-kinase 9 (815 aa).

MORN repeat units lie at residues 58–80, 81–103, 104–126, 127–149, 150–172, 173–195, 196–218, and 219–240; these read YSGSLLGNVPEGPGKYIWSDGCV, YDGEWRRGMRHGIGNMRWASGAS, YDGEFSGGYMHGSGTYVDANKLT, YKGRWRLNLKHGLGYQVYPNGDV, FEGSWIQGLGEGPGKYTWANKNV, YLGDMKGGKMSGKGTLTWVTGDS, YEGSWLNGMMHGVGVYTWSDGGC, and YVGTWTRGLKDGKGSFYSAGTR. The PIPK domain occupies 391–809; the sequence is GHRSYDLMLS…RFLEFIKKVF (419 aa). Residues 769–790 are activation loop; sequence YNMTKKIEHAYKSLHFDSLSIS.

In terms of assembly, interacts with CINV1. Widely expressed.

It localises to the membrane. It is found in the nucleus. The catalysed reaction is a 1,2-diacyl-sn-glycero-3-phospho-(1D-myo-inositol 4-phosphate) + ATP = a 1,2-diacyl-sn-glycero-3-phospho-(1D-myo-inositol-4,5-bisphosphate) + ADP + H(+). Plays a role in sugar-mediated root development. Interaction with CINV1 induces repression of CINV1 activity and negative regulation of sugar-mediated root cell elongation. This is Phosphatidylinositol 4-phosphate 5-kinase 9 (PIP5K9) from Arabidopsis thaliana (Mouse-ear cress).